A 46-amino-acid chain; its full sequence is Thymosin beta-a (46 aa).

Positions 21–30 (TNTAEKNTLP) are enriched in polar residues. The segment at 21-46 (TNTAEKNTLPTKEDIDQEKKAAEGGK) is disordered. Residues 31–46 (TKEDIDQEKKAAEGGK) show a composition bias toward basic and acidic residues.

Belongs to the thymosin beta family.

It is found in the cytoplasm. The protein localises to the cytoskeleton. Plays an important role in the organization of the cytoskeleton. Binds to and sequesters actin monomers (G actin) and therefore inhibits actin polymerization. In Cyprinus carpio (Common carp), this protein is Thymosin beta-a.